The chain runs to 1343 residues: Vascular endothelial growth factor receptor 2 (1343 aa).

The N-terminal stretch at 1 to 19 (MESRALLAVALWFCVETRA) is a signal peptide. At 20-760 (ASVGLPGDSL…EGVQEKTNLE (741 aa)) the chain is on the extracellular side. N-linked (GlcNAc...) asparagine glycosylation is found at N46, N96, N143, N158, and N245. Ig-like C2-type domains follow at residues 46-109 (NTTL…RDTD), 141-207 (NKNK…INDE), 224-320 (YDVV…KNKT), 328-414 (PFIA…HMVS), 421-540 (PQIG…RVIS), 547-654 (PEIT…LVKQ), and 663-749 (PMIT…TLFI). C53 and C103 are oxidised to a cystine. C150 and C200 are joined by a disulfide. Cysteines 246 and 307 form a disulfide. 11 N-linked (GlcNAc...) asparagine glycosylation sites follow: N318, N374, N395, N507, N576, N609, N615, N627, N671, N700, and N717. Cystine bridges form between C445–C526 and C567–C638. Residues C684 and C733 are joined by a disulfide bond. A helical transmembrane segment spans residues 761–781 (VIILVGTAVIAMFFWLLLVIL). At 782–1343 (VRTVKRANEG…SGTTLRSSPV (562 aa)) the chain is on the cytoplasmic side. Y797 is subject to Phosphotyrosine. The 329-residue stretch at 830–1158 (LKLGKPLGRG…FSELVEHLGN (329 aa)) folds into the Protein kinase domain. ATP contacts are provided by residues 836 to 844 (LGRGAFGQV) and K864. Y947 carries the post-translational modification Phosphotyrosine; by autocatalysis. Phosphoserine occurs at positions 978 and 980. Y992 carries the phosphotyrosine; by autocatalysis modification. A disulfide bridge connects residues C1020 and C1041. D1024 (proton acceptor) is an active-site residue. Phosphotyrosine; by autocatalysis occurs at positions 1050, 1055, 1171, and 1210. 2 positions are modified to phosphoserine: S1227 and S1231. T1234 carries the post-translational modification Phosphothreonine. Positions 1267-1314 (TLEDRNKLSPSFGGMMPSKSRESVASEGSNQTSGYQSGYHSDDTDTTV) are disordered. The span at 1292 to 1305 (SEGSNQTSGYQSGY) shows a compositional bias: polar residues. Phosphotyrosine; by autocatalysis is present on residues Y1301, Y1305, and Y1315.

This sequence belongs to the protein kinase superfamily. Tyr protein kinase family. CSF-1/PDGF receptor subfamily. In terms of assembly, homodimer in the presence of bound dimeric VEGFA, VEGFC or VEGFD ligands; monomeric in the absence of bound ligands. Can also form heterodimers with FLT1/VEGFR1 and KDR/VEGFR2. Interacts (tyrosine phosphorylated) with LFYN, NCK1, PLCG1. Interacts (tyrosine-phosphorylated active form preferentially) with DAB2IP (via C2 domain and active form preferentially); the interaction occurs at the late phase of VEGFA response and inhibits KDR/VEGFR2 activity. Interacts with SHBSH2D2A/TSAD, GRB2, MYOF, CBL and PDCD6. Interacts (via C-terminus domain) with ERN1 (via kinase domain); the interaction is facilitated in a XBP1- and vascular endothelial growth factor (VEGF)-dependent manner in endothelial cells. Interacts (via juxtamembrane region) with chaperone PDCL3 (via thioredoxin fold region); the interaction leads to increased KDR/VEGFR2 abundance through inhibition of its ubiquitination and degradation. Interacts (tyrosine phosphorylated) with CCDC88A/GIV (via SH2-like region); binding requires autophosphorylation of the KDR/VEGFR2 C-terminal region. Interacts with isoform 2 of BSG. Interacts with SLC31A1; this interaction is induced upon VEGFA stimulation leading to SLC31A1 and KDR subsequent co-internalization to early endosomes, thereby activating KDR downstream signaling in endothelial cells. Post-translationally, N-glycosylated. In terms of processing, ubiquitinated. Tyrosine phosphorylation of the receptor promotes its poly-ubiquitination, leading to its degradation via the proteasome or lysosomal proteases. Autophosphorylated on tyrosine residues upon ligand binding. Autophosphorylation occurs in trans, i.e. one subunit of the dimeric receptor phosphorylates tyrosine residues on the other subunit. Phosphorylation at Tyr-947 is important for interaction with SH2D2A/TSAD and VEGFA-mediated reorganization of the actin cytoskeleton. Phosphorylation at Tyr-1171 is important for interaction with PLCG1 and SHB. Phosphorylation at Tyr-1210 is important for interaction with NCK1 and FYN. Dephosphorylated by PTPRB. Dephosphorylated by PTPRJ at Tyr-797, Tyr-947, Tyr-992, Tyr-1050, Tyr-1055, Tyr-1171 and Tyr-1210. Post-translationally, the inhibitory disulfide bond between Cys-1020 and Cys-1041 may serve as a specific molecular switch for H(2)S-induced modification that regulates KDR/VEGFR2 function. Expressed in the post-pubertal mammary glands.

The protein resides in the cell membrane. It localises to the cytoplasm. Its subcellular location is the nucleus. It is found in the cytoplasmic vesicle. The protein localises to the early endosome. The protein resides in the cell junction. It localises to the endoplasmic reticulum. It catalyses the reaction L-tyrosyl-[protein] + ATP = O-phospho-L-tyrosyl-[protein] + ADP + H(+). Present in an inactive conformation in the absence of bound ligand. Binding of VEGFA, VEGFC or VEGFD leads to dimerization and activation by autophosphorylation on tyrosine residues. May be regulated by hydrogen sulfide (H(2)S) levels via a sensitive intracellular disulfide bond. Functionally, tyrosine-protein kinase that acts as a cell-surface receptor for VEGFA, VEGFC and VEGFD. Plays an essential role in the regulation of angiogenesis, vascular development, vascular permeability, and embryonic hematopoiesis. Promotes proliferation, survival, migration and differentiation of endothelial cells. Promotes reorganization of the actin cytoskeleton. Isoforms lacking a transmembrane domain may function as decoy receptors for VEGFA, VEGFC and/or VEGFD. Modulates FLT1 and FLT4 signaling by forming heterodimers. Binding of vascular growth factors to isoform 1 leads to the activation of several signaling cascades. Activation of PLCG1 leads to the production of the cellular signaling molecules diacylglycerol and inositol-1,4,5-trisphosphate and the activation of protein kinase C. Mediates activation of MAPK1/ERK2, MAPK3/ERK1 and the MAP kinase signaling pathway, as well as of the AKT1 signaling pathway. Mediates phosphorylation of PIK3R1, the regulatory subunit of phosphatidylinositol 3-kinase, reorganization of the actin cytoskeleton and activation of PTK2/FAK1. Required for VEGFA-mediated induction of NOS2 and NOS3, leading to the production of the signaling molecule nitric oxide (NO) by endothelial cells. Phosphorylates PLCG1. Promotes phosphorylation of FYN, NCK1, NOS3, PIK3R1, PTK2/FAK1 and SRC. In Rattus norvegicus (Rat), this protein is Vascular endothelial growth factor receptor 2.